The sequence spans 1386 residues: Adhesin AWP3b (1386 aa).

Positions 1-19 are cleaved as a signal peptide; it reads MISFVTLLAILGLLSISWA. 3 cysteine pairs are disulfide-bonded: cysteine 115/cysteine 145, cysteine 144/cysteine 178, and cysteine 304/cysteine 341. N-linked (GlcNAc...) asparagine glycosylation is present at asparagine 117. Residues asparagine 315, asparagine 345, asparagine 468, and asparagine 526 are each glycosylated (N-linked (GlcNAc...) asparagine). The tract at residues 429–507 is disordered; the sequence is TTDSPGHTIT…SSPTSDFSSV (79 aa). 2 disordered regions span residues 530–553 and 612–690; these read IVDS…SSSM and TTDS…FSSV. Asparagine 651 and asparagine 709 each carry an N-linked (GlcNAc...) asparagine glycan. Disordered stretches follow at residues 714-739 and 795-873; these read VDSS…MSSS and TTDS…FSSV. N-linked (GlcNAc...) asparagine glycans are attached at residues asparagine 834, asparagine 898, asparagine 1008, asparagine 1017, and asparagine 1096. The tract at residues 1000–1032 is disordered; sequence TIQESELSNTSRTTMTSNSSVSISSTSSRSSFS. Polar residues-rich tracts occupy residues 1140–1150 and 1159–1177; these read SHPVATNSGDK and QVST…SSFD. Residues 1140 to 1186 are disordered; sequence SHPVATNSGDKPTTPKRSEQVSTTMTSSGPTPDTSSFDTDGMSAYSR. The N-linked (GlcNAc...) asparagine glycan is linked to asparagine 1197. The segment covering 1198 to 1218 has biased composition (polar residues); it reads KSSTSQLGNNKQTFSNLQLES. The disordered stretch occupies residues 1198 to 1227; that stretch reads KSSTSQLGNNKQTFSNLQLESTRPHSENEV. A glycan (N-linked (GlcNAc...) asparagine) is linked at asparagine 1229. Residues 1241–1259 are compositionally biased toward polar residues; the sequence is STYGTNNVNPLSPTGSISI. Residues 1241 to 1269 form a disordered region; that stretch reads STYGTNNVNPLSPTGSISIPLTEDGQGDN. Residue asparagine 1287 is glycosylated (N-linked (GlcNAc...) asparagine).

The protein localises to the secreted. Its subcellular location is the cell wall. Functionally, may play a role in cell adhesion. The protein is Adhesin AWP3b of Candida glabrata (strain ATCC 2001 / BCRC 20586 / JCM 3761 / NBRC 0622 / NRRL Y-65 / CBS 138) (Yeast).